The following is a 329-amino-acid chain: Flotillin-like protein FloA (329 aa).

2 helical membrane-spanning segments follow: residues 6-26 and 27-47; these read FIVI…FVPI and GLWI…LVGM.

It belongs to the flotillin-like FloA family. Homooligomerizes.

The protein localises to the cell membrane. Its subcellular location is the membrane raft. Found in functional membrane microdomains (FMM) that may be equivalent to eukaryotic membrane rafts. FMMs are highly dynamic and increase in number as cells age. Flotillins are thought to be important factors in membrane fluidity. This chain is Flotillin-like protein FloA, found in Staphylococcus aureus (strain JH1).